We begin with the raw amino-acid sequence, 917 residues long: Transcriptional regulatory protein SEF1 (917 aa).

Residues 1–88 form a disordered region; sequence MKFEKGKVRI…SKPTGHRPVT (88 aa). Residues 13-27 show a composition bias toward pro residues; sequence KPSPTPTNPQTPLPL. The segment covering 56 to 70 has biased composition (low complexity); that stretch reads SNSTASTPNSATPTS. Over residues 71 to 81 the composition is skewed to polar residues; sequence VGTPPQKTSKP. Positions 90–120 form a DNA-binding region, zn(2)-C6 fungal-type; sequence CTFCRQHKIKCNASDNYPNPCERCKKMGLKC. The stretch at 129–164 forms a coiled coil; sequence RKGSQIQSLKSDVDELKAKIEMLTKNESLLTQALNQ. 2 disordered regions span residues 168–212 and 778–849; these read NHAS…ASPI and QQYP…PFIL. The segment covering 171-184 has biased composition (low complexity); sequence SQQQQSSGSQSQQQ. The segment covering 191–212 has biased composition (polar residues); sequence RALSYTSANSSPQVAFSNASPI. Residues 778–827 show a composition bias toward low complexity; it reads QQYPMQQDQQQQEPSQQQQQKHSQQSQQYQQQQQSNQQQPHLQHQRQFQQ.

In terms of assembly, interacts with SSN3 and SFU1. Phosphorylated by SSN3 under iron-depleted conditions which leads to nuclear localization.

It is found in the cytoplasm. The protein resides in the nucleus. Transcription factor which plays an essential role in virulence by activating the transcription of iron uptake genes such as FRE7 in iron-poor environments such as the host bloodstream and internal organs. Promotes commensalism in a mouse model of gastrointestinal infection. In Candida albicans (strain SC5314 / ATCC MYA-2876) (Yeast), this protein is Transcriptional regulatory protein SEF1 (SEF1).